A 74-amino-acid polypeptide reads, in one-letter code: O-conotoxin GeXXXIA (74 aa).

A signal peptide spans Met-1–Ala-22. Positions Val-23–Arg-33 are excised as a propeptide.

This sequence belongs to the conotoxin O1 superfamily. In terms of assembly, homodimer; disulfide-linked. May contain 2 intrachain disulfide bonds and probably one interchain disulfide bond forming the homodimer. Post-translationally, the disulfide pairing is not important for activity towards the different nAChR subtypes, since this peptide without disulfide bond or with different disulfide bonds shows the same activity. Expressed by the venom duct.

It is found in the secreted. Functionally, the activity of this natural homodimer has not been tested due to low abundance. The synthetic linear peptide has been refolded, giving 4 different monomeric isomers (m1 to m4) with 2 disulfide bonds each. All isomers potently inhibit rat alpha-1-beta-1-delta-epsilon/CHRNA1-CHRNB1-CHRND-CHRNE and human alpha-9-alpha-10/CHRNA9-CHRNA10 nicotinic acetylcholine receptors (nAChR). In addition, they show a modest inhibition at human alpha-3-beta-2/CHRNA3-CHRNB2, alpha-3-beta-4/CHRNA3-CHRNB4, alpha-7/CHRNA7, and alpha-4-beta-4/CHRNA4-CHRNB4. The synthetic monomer peptide without disulfide bonds shows a potent activity on alpha-9-alpha-10/CHRNA9 and CHRNA10 (IC(50)=16.2 nM). This linear peptide does not act as a competitive antagonist, or as a channel pore blocker of nAChR. This chain is O-conotoxin GeXXXIA, found in Conus generalis (General cone).